Reading from the N-terminus, the 365-residue chain is Metallophosphoesterase 1 homolog (365 aa).

The chain crosses the membrane as a helical span at residues 10-30 (PILLAIILVVYNEYFIFFIAF). The a divalent metal cation site is built by Asp54, Asp96, Asn132, His208, His262, and His264. The helical transmembrane segment at 319 to 339 (ILQIMVYIFGGIGIVILAFIL) threads the bilayer.

Belongs to the metallophosphoesterase superfamily. MPPE1 family. It depends on Mn(2+) as a cofactor.

The protein localises to the endoplasmic reticulum-Golgi intermediate compartment membrane. It is found in the golgi apparatus. It localises to the cis-Golgi network membrane. Metallophosphoesterase required for transport of GPI-anchor proteins from the endoplasmic reticulum to the Golgi. Acts in lipid remodeling steps of GPI-anchor maturation by mediating the removal of a side-chain ethanolamine-phosphate (EtNP) from the second Man (Man2) of the GPI intermediate, an essential step for efficient transport of GPI-anchor proteins. This chain is Metallophosphoesterase 1 homolog, found in Caenorhabditis elegans.